Here is a 342-residue protein sequence, read N- to C-terminus: tRNA N6-adenosine threonylcarbamoyltransferase (342 aa).

Residues H111 and H115 each coordinate Fe cation. Substrate-binding positions include 134 to 138 (LVSGG), D167, G180, and N275. D303 provides a ligand contact to Fe cation.

Belongs to the KAE1 / TsaD family. Requires Fe(2+) as cofactor.

It is found in the cytoplasm. It catalyses the reaction L-threonylcarbamoyladenylate + adenosine(37) in tRNA = N(6)-L-threonylcarbamoyladenosine(37) in tRNA + AMP + H(+). In terms of biological role, required for the formation of a threonylcarbamoyl group on adenosine at position 37 (t(6)A37) in tRNAs that read codons beginning with adenine. Is involved in the transfer of the threonylcarbamoyl moiety of threonylcarbamoyl-AMP (TC-AMP) to the N6 group of A37, together with TsaE and TsaB. TsaD likely plays a direct catalytic role in this reaction. In Paraburkholderia xenovorans (strain LB400), this protein is tRNA N6-adenosine threonylcarbamoyltransferase.